A 1002-amino-acid chain; its full sequence is SGGFDFSFLPQPPQEKGPMGLMGPRGPPGASGAPGPQGFQGPAGEPGEPGQTGPAGARGPAGPPGKAGGVVGPQGARGFPGTPGLPGFKGIRGHNGLDGLKGQPGAPGVKGEPGAPGENGTPGQTGARGLPGERGRVGAPGPAGSRGSDGSVGPVGPAGPIGSAGPPGFPGAPGPKGELGPVGNTGPGPAGPRGEQGLPGVSGPVGPPGNPGANGLTGAKGAAGLPGVAGAPGLPGPRGIPGPVGASGATGARGLVGEPGPAGSKGESGGKGEPGSAGPQGPPGSSGEEGKRGPSGESGSTGPTGPPGLRGGPGSRGLPGADGRAGVIGPAGARGASGPAGVRGPSGDTGRPGEPGLMGARGLPGSPGNVGPAGKEGPAGLPGIDGRPGPIGPAGARGEAGNIGFPGPKGPAGDPGKAGEKGHAGLAGNRGAPGPDGNNGAQGPPGLQGVQGGKGEQGPAGPPGFQGLPGPAGTTGEAGKPGERGIPGEFGLPGPAGPRGERGPPGESGAVGPSGAIGSRGPSGPPGPDGNKGEPGVVGAPGTAGPAGSGGLPGERGAAGIPGGKGEKGETGLRGEVGTTGRDGARGAPGAVGAPGPAGATGDRGEAGAAGPAGPAGPRGSPGERGEVGPAGPNGFAGPAGAAGQPGAKGERGTKGPKGENGIVGPTGPVGSAGPAGPNGPAGPAGSRGDGGPPGVTGFPGAAGRTGPPGPSGITGPPGPPGAAGKEGLRGPRGDQGPVGRTGETGAGGPPGFTGEKGPSGEPGTAGPPGTAGPQGLLGAPGILGLPGSRGERGLPGVAGAVGEPGPLGIGPPGARGPSGGVGPGVNGAPGEAGRDGPPGRDGLPGHKGERGYAGNAGPVGAAGAPGPHGAVGPAGKHGNRGEPGPVGSAGPVGALGPRGPSGPQGIRGDKGEAGDKGPRGLPGGLQGLPGLAGQHGDQGAPGPVGPAGPRGPAGPSGPPGKDGRTGHPGAVGPAGIRGSQGSQGPSGPPGPPGPPGPPGAS.

Positions S1–S1002 are disordered. Residues P10, P13, P28, and P34 each carry the 4-hydroxyproline modification. Residues G17–P60 show a composition bias toward low complexity. K89 carries the post-translational modification 5-hydroxylysine; alternate. A glycan (O-linked (Gal...) hydroxylysine; alternate) is linked at K89. 2 stretches are compositionally biased toward low complexity: residues S145–P166 and P211–P232. The span at G266 to G275 shows a compositional bias: gly residues. Over residues S276–S286 the composition is skewed to low complexity. Residues G308–G317 show a composition bias toward gly residues. Over residues P330 to S346 the composition is skewed to low complexity. P352 and P355 each carry 4-hydroxyproline. The span at L381–A400 shows a compositional bias: low complexity. Residues G449–G458 show a composition bias toward gly residues. Composition is skewed to low complexity over residues P505–P522 and E534–A544. Over residues G545–G554 the composition is skewed to gly residues. Composition is skewed to low complexity over residues V577–S621 and V628–A648. The segment covering K649 to K658 has biased composition (basic and acidic residues). Low complexity predominate over residues P666 to A676. A compositionally biased stretch (gly residues) spans G686–G695. A compositionally biased stretch (low complexity) spans T697–T706. Residues G743–G752 show a composition bias toward gly residues. 2 stretches are compositionally biased toward low complexity: residues S760–P787 and L795–P805. Residues G806–G828 show a composition bias toward gly residues. Positions A833 to R851 are enriched in basic and acidic residues. Low complexity predominate over residues Y853 to P898. The segment covering R908–P919 has biased composition (basic and acidic residues). A compositionally biased stretch (pro residues) spans S987–S1002.

Belongs to the fibrillar collagen family. Trimers of one alpha 2(I) and two alpha 1(I) chains. Interacts (via C-terminus) with TMEM131 (via PapD-L domain); the interaction is direct and is involved in assembly and TRAPPIII ER-to-Golgi transport complex-dependent secretion of collagen. Post-translationally, prolines at the third position of the tripeptide repeating unit (G-X-Y) are hydroxylated in some or all of the chains. Expressed in bones.

It is found in the secreted. The protein resides in the extracellular space. The protein localises to the extracellular matrix. Functionally, type I collagen is a member of group I collagen (fibrillar forming collagen). This is Collagen alpha-2(I) chain from Glossotherium robustum (Ground sloth).